We begin with the raw amino-acid sequence, 430 residues long: MSGVRPPIMNGPMHPRPLVALLDGRDCTVEMPILKDVATVAFCDAQSTQEIHEKVLNEAVGALMYHTITLTREDLEKFKALRIIVRIGSGFDNIDIKSAGDLGIAVCNVPAASVEETADSTLCHILNLYRRTTWLHQALREGTRVQSVEQIREVASGAARIRGETLGIIGLGRVGQAVALRAKAFGFNVLFYDPYLSDGIERALGLQRVSTLQDLLFHSDCVTLHCGLNEHNHHLINDFTVKQMRQGAFLVNTARGGLVDEKALAQALKEGRIRGAALDVHESEPFSFSQGPLKDAPNLICTPHAAWYSEQASIEMREEAAREIRRAITGRIPDSLKNCVNKDHLTAATHWASMDPAVVHPELNGAAYSRYPPGVVSVAPTGIPAAVEGIVPSAMSLSHGLPPVAHPPHAPSPGQTVKPEADRDHTTDQL.

The tract at residues 1-59 is interaction with GLIS2 1; that stretch reads MSGVRPPIMNGPMHPRPLVALLDGRDCTVEMPILKDVATVAFCDAQSTQEIHEKVLNEA. NAD(+) contacts are provided by residues Ser-89, 169-174, Asp-193, 226-232, 253-255, and Asp-279; these read IGLGRV, CGLNEHN, and TAR. Arg-255 is an active-site residue. Residues 277–349 form an interaction with GLIS2 2 region; the sequence is ALDVHESEPF…VNKDHLTAAT (73 aa). Residue Glu-284 is part of the active site. Ser-289 is subject to Phosphoserine. Catalysis depends on His-304, which acts as the Proton donor. The disordered stretch occupies residues 398 to 430; that stretch reads SHGLPPVAHPPHAPSPGQTVKPEADRDHTTDQL. At Ser-412 the chain carries Phosphoserine. A Glycyl lysine isopeptide (Lys-Gly) (interchain with G-Cter in SUMO) cross-link involves residue Lys-418. Residues 419 to 430 show a composition bias toward basic and acidic residues; that stretch reads PEADRDHTTDQL.

This sequence belongs to the D-isomer specific 2-hydroxyacid dehydrogenase family. In terms of assembly, homo- or heterodimer. Heterodimer with CTBP2. Interacts with ELK3 (via its PXDLS motif). Interacts with RBBP8 (via its PXDLS motif); the interaction is disrupted by binding to adenovirus E1A. Interacts with PNN, MECOM and ZFHX1B. Interacts with ZNF366 (via PXDLS motif). Interaction with SATB1 (non-acetylated form); the interaction stabilizes its attachment to DNA and promotes transcription repression. Interacts with PRDM16; the interaction represses white adipose tissue (WAT)-specific genes expression. Interacts with GLIS2, HIPK2, FOXP1, FOXP2, HDAC4, HDAC5, HDAC9, NRIP1 and WIZ. Interacts with ZNF217. Interacts with BCL6; the interaction is required for BCL6 transcriptional autoinhibition and inhibition of some BCL6 target genes. Interacts with IKZF4. Interacts with MCRIP1 (unphosphorylated form, via the PXDLS motif); competitively inhibiting CTBP-ZEB1 interaction. Interacts with Bassoon/BSN; this interaction targets and anchors CTBP1 to presynapses. Interacts with SIMC1. NAD(+) serves as cofactor. The level of phosphorylation appears to be regulated during the cell cycle. Phosphorylation by HIPK2 on Ser-412 induces proteasomal degradation. Post-translationally, ADP-ribosylated; when cells are exposed to brefeldin A. In terms of processing, sumoylation on Lys-418 is promoted by the E3 SUMO-protein ligase CBX4.

The protein localises to the cytoplasm. Its subcellular location is the nucleus. It localises to the synapse. The protein resides in the synaptosome. Corepressor targeting diverse transcription regulators such as GLIS2 or BCL6. Has dehydrogenase activity. Involved in controlling the equilibrium between tubular and stacked structures in the Golgi complex. Functions in brown adipose tissue (BAT) differentiation. This Rattus norvegicus (Rat) protein is C-terminal-binding protein 1 (Ctbp1).